Here is a 488-residue protein sequence, read N- to C-terminus: MFLLLLLIPLIGIGFVTIEGNYGLSLINNIRIKSIALTTSIINLVVSLIMFILFDFSSKQFQFIEEHYQISYFDIYLGVDGLSIYFILLTTIIMPIAILCNWNSIQSKNVLSFVVIMLLLETLLLAVFLVLDVLLFYIFFESILPPLFLLIGLFGSSNKVRASFYLFLYTLLGSLFMLLSIVAMSSIMGTTDFDALSKSNFNYVTQLFLFYGIFIAFAVKTPVSFLNTWLLKAHVESPLSGSIILAGIVLKLSLYGIFRLILPLLPKASLNYTYIIYVIGVITIIYASFSTLRTIDIKELIAYSSVSHAAVYSIGAFSNTIQGIEGSIALGLAHGFVSSGLFICAGGILYDRSSTRLITYYRGMAQVMPIFSVLFFILSLGNSGTPLTLNFIGEFMSLYGVFERMPLLGVLASTSIVFSAAYTIFMYNRIVFGGSYSIYFVENIGDVTRREFIMLLVFVVLTVLFGIYPAPILDGLHYSVSSLIYSIN.

Transmembrane regions (helical) follow at residues 1–21, 34–54, 79–99, 110–130, 134–154, 164–184, 207–227, 238–258, 272–292, 301–321, 328–348, 367–387, 407–427, and 452–472; these read MFLL…IEGN, SIAL…FILF, VDGL…IAIL, VLSF…VFLV, LLFY…IGLF, FYLF…IVAM, LFLF…SFLN, PLSG…YGIF, YTYI…FSTL, IAYS…SNTI, IALG…AGGI, VMPI…GTPL, LLGV…IFMY, and FIML…PAPI.

This sequence belongs to the complex I subunit 4 family.

The protein localises to the mitochondrion membrane. The catalysed reaction is a ubiquinone + NADH + 5 H(+)(in) = a ubiquinol + NAD(+) + 4 H(+)(out). In terms of biological role, core subunit of the mitochondrial membrane respiratory chain NADH dehydrogenase (Complex I) that is believed to belong to the minimal assembly required for catalysis. Complex I functions in the transfer of electrons from NADH to the respiratory chain. The immediate electron acceptor for the enzyme is believed to be ubiquinone. The sequence is that of NADH-ubiquinone oxidoreductase chain 4 (ND4) from Aspergillus amstelodami.